The following is a 111-amino-acid chain: MSEQAVENTVLDRFECRSCGYVYEPEKGDNKHDIAPETPFAELPINWRCPVCTAKKAAFTNIGPAGTASGFRENLGYGLGVNKLTPAQKNILIFGALALGFLFFISLYGLQ.

Residues 11-62 form the Rubredoxin-like domain; the sequence is LDRFECRSCGYVYEPEKGDNKHDIAPETPFAELPINWRCPVCTAKKAAFTNI. The Fe cation site is built by C16, C19, C49, and C52.

Belongs to the rubredoxin family. It depends on Fe(3+) as a cofactor.

Functionally, rubredoxin is a small nonheme, iron protein lacking acid-labile sulfide. Its single Fe, chelated to 4 Cys, functions as an electron acceptor and may also stabilize the conformation of the molecule. Could be involved in hydrogenase-linked redox processes. The polypeptide is Rubredoxin (rub) (Nostoc sp. (strain PCC 7120 / SAG 25.82 / UTEX 2576)).